We begin with the raw amino-acid sequence, 476 residues long: Growth/differentiation factor 10 (476 aa).

Residues 1–29 (MAPGPARISLGSQLLPMVPLLLLLRGAGC) form the signal peptide. A propeptide spanning residues 30–366 (GHRGPSWSSL…EKTMQKARRR (337 aa)) is cleaved from the precursor. Positions 39–63 (LPSAAAGLQGDRDSQQSPGDAAAAL) are disordered. N114, N152, and N277 each carry an N-linked (GlcNAc...) asparagine glycan. Residues 268 to 301 (GDFEPGAAPNSSADPRVRRAAQVSKPLQDNELPG) are disordered. 3 disulfide bridges follow: C374-C441, C403-C473, and C407-C475. An N-linked (GlcNAc...) asparagine glycan is attached at N467.

The protein belongs to the TGF-beta family. In terms of assembly, homodimer or heterodimer. Can form a non-covalent complex of the mature region and the pro-region. In terms of tissue distribution, highly expressed in epididymal adipose tissue, brain, bone and aorta and to a lesser extent in liver and spleen. Expressed at higher levels in preadipocytes than in mature adipocytes. Strongly expressed in glial cells of the cerebellum.

Its subcellular location is the secreted. In terms of biological role, growth factor involved in osteogenesis and adipogenesis. Plays an inhibitory role in the process of osteoblast differentiation via SMAD2/3 pathway. Plays an inhibitory role in the process of adipogenesis. The polypeptide is Growth/differentiation factor 10 (Mus musculus (Mouse)).